A 296-amino-acid chain; its full sequence is Glycerol-3-phosphate dehydrogenase [NAD(P)+] (296 aa).

NADPH-binding residues include Trp-12, Arg-31, and Lys-80. Residues Lys-80, Gly-108, and Ser-110 each contribute to the sn-glycerol 3-phosphate site. Ala-112 lines the NADPH pocket. Positions 162, 215, 225, 226, and 227 each coordinate sn-glycerol 3-phosphate. The active-site Proton acceptor is the Lys-162. Residue Arg-226 coordinates NADPH. NADPH-binding residues include Val-250 and Glu-252.

Belongs to the NAD-dependent glycerol-3-phosphate dehydrogenase family.

The protein resides in the cytoplasm. It carries out the reaction sn-glycerol 3-phosphate + NAD(+) = dihydroxyacetone phosphate + NADH + H(+). The catalysed reaction is sn-glycerol 3-phosphate + NADP(+) = dihydroxyacetone phosphate + NADPH + H(+). It participates in membrane lipid metabolism; glycerophospholipid metabolism. Catalyzes the reduction of the glycolytic intermediate dihydroxyacetone phosphate (DHAP) to sn-glycerol 3-phosphate (G3P), the key precursor for phospholipid synthesis. This is Glycerol-3-phosphate dehydrogenase [NAD(P)+] from Sulfurimonas denitrificans (strain ATCC 33889 / DSM 1251) (Thiomicrospira denitrificans (strain ATCC 33889 / DSM 1251)).